The following is a 469-amino-acid chain: 3-isopropylmalate dehydratase large subunit (469 aa).

Residues Cys347, Cys408, and Cys411 each coordinate [4Fe-4S] cluster.

The protein belongs to the aconitase/IPM isomerase family. LeuC type 1 subfamily. As to quaternary structure, heterodimer of LeuC and LeuD. [4Fe-4S] cluster serves as cofactor.

It catalyses the reaction (2R,3S)-3-isopropylmalate = (2S)-2-isopropylmalate. Its pathway is amino-acid biosynthesis; L-leucine biosynthesis; L-leucine from 3-methyl-2-oxobutanoate: step 2/4. Catalyzes the isomerization between 2-isopropylmalate and 3-isopropylmalate, via the formation of 2-isopropylmaleate. The polypeptide is 3-isopropylmalate dehydratase large subunit (Haemophilus influenzae (strain 86-028NP)).